Reading from the N-terminus, the 89-residue chain is Dynein light chain 2, cytoplasmic (89 aa).

The protein belongs to the dynein light chain family. Homodimer. The cytoplasmic dynein 1 complex consists of two catalytic heavy chains (HCs) and a number of non-catalytic subunits which present intermediate chains (ICs), light intermediate chains (LICs) and light chains (LCs); the composition seems to vary in respect to the IC, LIC and LC composition. The heavy chain homodimer serves as a scaffold for the probable homodimeric assembly of the respective non-catalytic subunits. Dynein ICs and LICs bind directly to the HC dimer and the LCs assemble on the IC dimer. Interacts with DYNC1I1. Interacts with BMF. Component of the myosin V motor complex. Interacts with BCAS1. Interacts with Basson/BSN. Interacts with AMBRA1 (via TQT motifs); tethering AMBRA1 to the cytoskeleton. Interacts with IQUB.

Its subcellular location is the cytoplasm. It is found in the cytoskeleton. In terms of biological role, acts as one of several non-catalytic accessory components of the cytoplasmic dynein 1 complex that are thought to be involved in linking dynein to cargos and to adapter proteins that regulate dynein function. Cytoplasmic dynein 1 acts as a motor for the intracellular retrograde motility of vesicles and organelles along microtubules. May play a role in changing or maintaining the spatial distribution of cytoskeletal structures. The polypeptide is Dynein light chain 2, cytoplasmic (DYNLL2) (Homo sapiens (Human)).